We begin with the raw amino-acid sequence, 447 residues long: Phospholipase A(1) DAD1, chloroplastic (447 aa).

A chloroplast-targeting transit peptide spans 1-46 (MRFSLSPVRPHSVVVPSLPKQDVVSYISGTTSNRQCRCVLTLPSPS). A GXSXG motif is present at residues 293–297 (GHSLG). S295 acts as the Acyl-ester intermediate in catalysis. Active-site charge relay system residues include D352 and H418.

This sequence belongs to the AB hydrolase superfamily. Lipase family. Expressed in flower buds, but not in leaves or roots. Restricted to the stamen filaments immediately before flower opening.

It localises to the plastid. It is found in the chloroplast. It catalyses the reaction a 1,2-diacyl-sn-glycero-3-phosphocholine + H2O = a 2-acyl-sn-glycero-3-phosphocholine + a fatty acid + H(+). The enzyme catalyses 1-hexadecanoyl-2-(9Z,12Z-octadecadienoyl)-sn-glycero-3-phosphocholine + H2O = 2-(9Z,12Z-octadecadienoyl)-sn-glycero-3-phosphocholine + hexadecanoate + H(+). In terms of biological role, sn-1-specific phospholipase that releases free fatty acids from phospholipids. Low activity on galactolipids and triacylglycerols. Catalyzes the initial step of jasmonic acid biosynthesis. Not essential for jasmonate biosynthesis after wounding or upon pathogen infection. The chain is Phospholipase A(1) DAD1, chloroplastic from Arabidopsis thaliana (Mouse-ear cress).